We begin with the raw amino-acid sequence, 46 residues long: Protein PsbN (46 aa).

Residues 7–27 traverse the membrane as a helical segment; that stretch reads ALSVAIGVLAVLFGLTGFGVY.

This sequence belongs to the PsbN family.

It localises to the cellular thylakoid membrane. May play a role in photosystem I and II biogenesis. This chain is Protein PsbN, found in Synechococcus sp. (strain CC9605).